A 299-amino-acid polypeptide reads, in one-letter code: Probable lipid kinase YegS (299 aa).

One can recognise a DAGKc domain in the interval 2–133 (AEFPASLLIL…IDMAQVNKQT (132 aa)). Residues Thr-40, 66-72 (GDGTINE), and Thr-95 contribute to the ATP site. Mg(2+)-binding residues include Leu-215, Asp-218, and Leu-220. Glu-271 (proton acceptor) is an active-site residue.

Belongs to the diacylglycerol/lipid kinase family. YegS lipid kinase subfamily. It depends on Mg(2+) as a cofactor. Ca(2+) is required as a cofactor.

It localises to the cytoplasm. Probably phosphorylates lipids; the in vivo substrate is unknown. This is Probable lipid kinase YegS from Escherichia coli (strain 55989 / EAEC).